A 1284-amino-acid chain; its full sequence is DNA-directed RNA polymerase subunit beta (1284 aa).

It belongs to the RNA polymerase beta chain family. The RNAP catalytic core consists of 2 alpha, 1 beta, 1 beta' and 1 omega subunit. When a sigma factor is associated with the core the holoenzyme is formed, which can initiate transcription.

It carries out the reaction RNA(n) + a ribonucleoside 5'-triphosphate = RNA(n+1) + diphosphate. Its function is as follows. DNA-dependent RNA polymerase catalyzes the transcription of DNA into RNA using the four ribonucleoside triphosphates as substrates. The chain is DNA-directed RNA polymerase subunit beta from Mesoplasma florum (strain ATCC 33453 / NBRC 100688 / NCTC 11704 / L1) (Acholeplasma florum).